A 133-amino-acid polypeptide reads, in one-letter code: Hemoglobin subunit alpha-2 (133 aa).

The Globin domain maps to 1 to 133 (NVKAVWEHVK…VKNVLTSRYR (133 aa)). Position 50 (His50) interacts with O2. His79 provides a ligand contact to heme b.

Belongs to the globin family. In terms of assembly, minor hemoglobin is a heterotetramer of two alpha-2 chains and two beta-2 chains. In terms of tissue distribution, red blood cells.

Involved in oxygen transport from the lung to the various peripheral tissues. In Pleurodeles waltl (Iberian ribbed newt), this protein is Hemoglobin subunit alpha-2.